Consider the following 188-residue polypeptide: UPF0200 protein YG5714_1176 (188 aa).

Position 15-22 (15-22 (GMPGSGKS)) interacts with ATP.

It belongs to the UPF0200 family.

The sequence is that of UPF0200 protein YG5714_1176 from Saccharolobus islandicus (strain Y.G.57.14 / Yellowstone #1) (Sulfolobus islandicus).